A 138-amino-acid polypeptide reads, in one-letter code: Acidic phospholipase A2 Ts-A3 (138 aa).

A signal peptide spans 1–16; the sequence is MRTLWIMAVLLLGVEG. Cystine bridges form between Cys42-Cys132, Cys44-Cys60, Cys59-Cys111, Cys65-Cys138, Cys66-Cys104, Cys73-Cys97, and Cys91-Cys102. Residues Tyr43, Gly45, and Gly47 each contribute to the Ca(2+) site. The active site involves His63. Asp64 serves as a coordination point for Ca(2+). Residue Asp105 is part of the active site.

It depends on Ca(2+) as a cofactor. In terms of tissue distribution, expressed by the venom gland.

It is found in the secreted. It catalyses the reaction a 1,2-diacyl-sn-glycero-3-phosphocholine + H2O = a 1-acyl-sn-glycero-3-phosphocholine + a fatty acid + H(+). Its function is as follows. Snake venom phospholipase A2 (PLA2) that shows a moderate inhibition of ADP-induced human platelet aggregation when tested on platelet rich plasma. Exhibits high hydrolytic activities and prefers the anionic micelles (dPPC with deoxycholate) to the zwitterionic micelles (dPPC with Triton X-100). PLA2 catalyzes the calcium-dependent hydrolysis of the 2-acyl groups in 3-sn-phosphoglycerides. The protein is Acidic phospholipase A2 Ts-A3 of Trimeresurus stejnegeri (Chinese green tree viper).